We begin with the raw amino-acid sequence, 103 residues long: MYAVFQSGGKQHRVSEGQTLRLEKLDVETGATVEFDKVLLVANGEDIKVGAPLVEGGKVVAEVVQHGRGDKVKIVKFRRRKHSRKQQGHRQWFTEVKITGINA.

The protein belongs to the bacterial ribosomal protein bL21 family. In terms of assembly, part of the 50S ribosomal subunit. Contacts protein L20.

In terms of biological role, this protein binds to 23S rRNA in the presence of protein L20. The polypeptide is Large ribosomal subunit protein bL21 (Vibrio cholerae serotype O1 (strain ATCC 39541 / Classical Ogawa 395 / O395)).